Here is a 447-residue protein sequence, read N- to C-terminus: Phosphoglucosamine mutase (447 aa).

The active-site Phosphoserine intermediate is Ser102. Positions 102, 241, 243, and 245 each coordinate Mg(2+). At Ser102 the chain carries Phosphoserine.

This sequence belongs to the phosphohexose mutase family. It depends on Mg(2+) as a cofactor. Activated by phosphorylation.

The catalysed reaction is alpha-D-glucosamine 1-phosphate = D-glucosamine 6-phosphate. Catalyzes the conversion of glucosamine-6-phosphate to glucosamine-1-phosphate. The protein is Phosphoglucosamine mutase of Methylococcus capsulatus (strain ATCC 33009 / NCIMB 11132 / Bath).